The chain runs to 251 residues: Methionine aminopeptidase (251 aa).

His76 is a binding site for substrate. The a divalent metal cation site is built by Asp93, Asp104, and His168. His175 is a binding site for substrate. The a divalent metal cation site is built by Glu202 and Glu233.

This sequence belongs to the peptidase M24A family. Methionine aminopeptidase type 1 subfamily. In terms of assembly, monomer. Co(2+) is required as a cofactor. Zn(2+) serves as cofactor. The cofactor is Mn(2+). Requires Fe(2+) as cofactor.

It carries out the reaction Release of N-terminal amino acids, preferentially methionine, from peptides and arylamides.. In terms of biological role, removes the N-terminal methionine from nascent proteins. The N-terminal methionine is often cleaved when the second residue in the primary sequence is small and uncharged (Met-Ala-, Cys, Gly, Pro, Ser, Thr, or Val). Requires deformylation of the N(alpha)-formylated initiator methionine before it can be hydrolyzed. In Staphylococcus epidermidis (strain ATCC 12228 / FDA PCI 1200), this protein is Methionine aminopeptidase.